Reading from the N-terminus, the 315-residue chain is Adenine deaminase (315 aa).

Zn(2+) is bound by residues histidine 14, histidine 16, and histidine 194. Glutamate 197 acts as the Proton donor in catalysis. Aspartate 275 lines the Zn(2+) pocket. Residue aspartate 276 participates in substrate binding.

This sequence belongs to the metallo-dependent hydrolases superfamily. Adenosine and AMP deaminases family. Adenine deaminase type 2 subfamily. Zn(2+) is required as a cofactor.

The enzyme catalyses adenine + H2O + H(+) = hypoxanthine + NH4(+). Catalyzes the hydrolytic deamination of adenine to hypoxanthine. Plays an important role in the purine salvage pathway and in nitrogen catabolism. The protein is Adenine deaminase of Pseudomonas putida (strain W619).